The following is a 210-amino-acid chain: Protein GrpE (210 aa).

Disordered regions lie at residues 1-40 and 191-210; these read MTDDTTKNGPDATAADAAADATAYVENETAQQEPAQPDPI and KGGPKPAEAETNSVFDEKDA. A compositionally biased stretch (low complexity) spans 11-23; the sequence is DATAADAAADATA.

The protein belongs to the GrpE family. In terms of assembly, homodimer.

It localises to the cytoplasm. Functionally, participates actively in the response to hyperosmotic and heat shock by preventing the aggregation of stress-denatured proteins, in association with DnaK and GrpE. It is the nucleotide exchange factor for DnaK and may function as a thermosensor. Unfolded proteins bind initially to DnaJ; upon interaction with the DnaJ-bound protein, DnaK hydrolyzes its bound ATP, resulting in the formation of a stable complex. GrpE releases ADP from DnaK; ATP binding to DnaK triggers the release of the substrate protein, thus completing the reaction cycle. Several rounds of ATP-dependent interactions between DnaJ, DnaK and GrpE are required for fully efficient folding. This Rhizobium johnstonii (strain DSM 114642 / LMG 32736 / 3841) (Rhizobium leguminosarum bv. viciae) protein is Protein GrpE.